The sequence spans 420 residues: Phosphoribosylamine--glycine ligase (420 aa).

The 207-residue stretch at 108 to 314 (KEIMVKYGVP…FAQNITDILD (207 aa)) folds into the ATP-grasp domain. 134-195 (IEKHGAPIVV…EEFLEGEEFS (62 aa)) is an ATP binding site. Mg(2+)-binding residues include glutamate 284 and asparagine 286.

The protein belongs to the GARS family. It depends on Mg(2+) as a cofactor. The cofactor is Mn(2+).

It catalyses the reaction 5-phospho-beta-D-ribosylamine + glycine + ATP = N(1)-(5-phospho-beta-D-ribosyl)glycinamide + ADP + phosphate + H(+). It functions in the pathway purine metabolism; IMP biosynthesis via de novo pathway; N(1)-(5-phospho-D-ribosyl)glycinamide from 5-phospho-alpha-D-ribose 1-diphosphate: step 2/2. The sequence is that of Phosphoribosylamine--glycine ligase from Streptococcus pneumoniae serotype 4 (strain ATCC BAA-334 / TIGR4).